The chain runs to 1212 residues: Solute carrier family 12 member 2 (1212 aa).

Methionine 1 is modified (N-acetylmethionine). Residues methionine 1–glycine 286 are Cytoplasmic-facing. Disordered stretches follow at residues glycine 36–phenylalanine 81, glycine 112–arginine 138, and serine 150–serine 193. Phosphoserine is present on residues serine 77 and serine 79. The short motif at arginine 80–valine 83 is the RFXV motif 1 element. Residues glutamate 127–glycine 137 show a composition bias toward basic and acidic residues. The RFXV motif 2 signature appears at arginine 138–valine 141. Positions serine 150–alanine 160 are enriched in low complexity. Phosphothreonine; by OXSR1 and STK39 occurs at positions 203, 207, and 212. 2 positions are modified to phosphothreonine: threonine 217 and threonine 230. At serine 242 the chain carries Phosphoserine. Threonine 266 bears the Phosphothreonine mark. The discontinuously helical transmembrane segment at tryptophan 287–glycine 316 threads the bilayer. Leucine 297 provides a ligand contact to Na(+). K(+) contacts are provided by asparagine 298 and isoleucine 299. Tryptophan 300 is a Na(+) binding site. The chloride site is built by glycine 301, valine 302, and methionine 303. Residues isoleucine 317–leucine 336 traverse the membrane as a helical segment. Residues serine 337–alanine 367 are Cytoplasmic-facing. The chain crosses the membrane as a helical span at residues isoleucine 368 to leucine 395. Phenylalanine 372 serves as a coordination point for chloride. K(+) is bound at residue tyrosine 383. Residues lysine 396–glutamate 405 are Extracellular-facing. The helical transmembrane segment at isoleucine 406–glutamate 429 threads the bilayer. The Cytoplasmic portion of the chain corresponds to tryptophan 430–alanine 432. Residues lysine 433–phenylalanine 454 form a helical membrane-spanning segment. Topologically, residues isoleucine 455–threonine 486 are extracellular. Residues phenylalanine 487–glycine 504 traverse the membrane as a discontinuously helical segment. K(+)-binding residues include proline 496, alanine 497, and threonine 499. Chloride is bound by residues proline 496 and alanine 497. Residues glycine 500 and isoleucine 501 each contribute to the chloride site. Over alanine 505–proline 519 the chain is Cytoplasmic. The chain crosses the membrane as a helical span at residues lysine 520–glycine 541. The Extracellular portion of the chain corresponds to serine 542 to glycine 598. Residues asparagine 553 and asparagine 562 are each glycosylated (N-linked (GlcNAc...) asparagine). Intrachain disulfides connect cysteine 563–cysteine 568 and cysteine 577–cysteine 582. A helical membrane pass occupies residues phenylalanine 599–proline 623. 3 residues coordinate Na(+): alanine 610, serine 613, and serine 614. Residues lysine 624–proline 651 are Cytoplasmic-facing. The next 2 helical transmembrane spans lie at leucine 652–asparagine 672 and valine 673–phenylalanine 691. 2 residues coordinate chloride: phenylalanine 682 and tyrosine 686. The Cytoplasmic portion of the chain corresponds to serine 692–tryptophan 714. 2 helical membrane-spanning segments follow: residues isoleucine 715–tryptophan 732 and tryptophan 733–leucine 745. Residues tyrosine 746–serine 1212 lie on the Cytoplasmic side of the membrane. Residues serine 761–serine 778 are scissor helix. Phosphoserine occurs at positions 940 and 944. A compositionally biased stretch (basic and acidic residues) spans leucine 962–glutamate 978. A disordered region spans residues leucine 962–leucine 989. Serine 994 is modified (phosphoserine).

It belongs to the SLC12A transporter family. As to quaternary structure, homodimer; adopts a domain-swap conformation at the scissor helices connecting the transmembrane domain and C-terminal domain. Phosphorylated at Thr-203, Thr-207 and Thr-212 by OXSR1/OSR1 and STK39/SPAK downstream of WNK kinases (WNK1, WNK2, WNK3 or WNK4), promoting its activity. In terms of tissue distribution, expressed in many tissues.

It localises to the basolateral cell membrane. It catalyses the reaction K(+)(out) + 2 chloride(out) + Na(+)(out) = K(+)(in) + 2 chloride(in) + Na(+)(in). Activated following phosphorylation by OXSR1/OSR1 and STK39/SPAK downstream of WNK kinases (WNK1, WNK2, WNK3 or WNK4). Inhibited by bumetanide. Inhibited by furosemide. Its function is as follows. Cation-chloride cotransporter which mediates the electroneutral transport of chloride, potassium and/or sodium ions across the membrane. Plays a vital role in the regulation of ionic balance and cell volume. In Homo sapiens (Human), this protein is Solute carrier family 12 member 2 (SLC12A2).